We begin with the raw amino-acid sequence, 1046 residues long: FERM, ARHGEF and pleckstrin domain-containing protein 1 (1046 aa).

The FERM domain occupies I40–E320. The segment at L374–S522 is disordered. The segment covering K413 to Q424 has biased composition (basic and acidic residues). A compositionally biased stretch (polar residues) spans R458 to L513. Residues K541 to N732 form the DH domain. The region spanning E761–D858 is the PH 1 domain. Residues S864–H907 are disordered. Acidic residues predominate over residues T884–L894. Positions E933–S1030 constitute a PH 2 domain.

As to quaternary structure, interacts with PLXNA4. Detected in lateral motor column motor neurons and in preganglionic autonomic motor neurons of the column of Terni in the embryonic spinal cord (at protein level).

The protein localises to the cell membrane. It localises to the synapse. It is found in the synaptosome. The protein resides in the cytoplasm. Its subcellular location is the cytosol. The protein localises to the cell projection. It localises to the filopodium. It is found in the dendrite. The protein resides in the dendritic spine. In terms of biological role, functions as a guanine nucleotide exchange factor for RAC1. Plays a role in semaphorin signaling via its interaction with PLXNA4. Plays a role in the assembly and disassembly of dendritic filopodia, the formation of dendritic spines, regulation of dendrite length and ultimately the formation of synapses. This chain is FERM, ARHGEF and pleckstrin domain-containing protein 1 (FARP1), found in Gallus gallus (Chicken).